The sequence spans 299 residues: Regucalcin (299 aa).

Position 18 (glutamate 18) interacts with a divalent metal cation. Residues arginine 101, asparagine 103, and glutamate 121 each coordinate substrate. N6-succinyllysine is present on lysine 144. Asparagine 154 and aspartate 204 together coordinate a divalent metal cation. Aspartate 204 serves as the catalytic Proton donor/acceptor. Lysine 244 and lysine 253 each carry N6-succinyllysine.

It belongs to the SMP-30/CGR1 family. As to quaternary structure, monomer. Zn(2+) is required as a cofactor. Mn(2+) serves as cofactor. Requires Ca(2+) as cofactor. It depends on Mg(2+) as a cofactor. In terms of tissue distribution, mainly present in the liver. Weak expression was found in the brain, lung and kidney.

It localises to the cytoplasm. It carries out the reaction D-glucono-1,5-lactone + H2O = D-gluconate + H(+). It participates in cofactor biosynthesis; L-ascorbate biosynthesis via UDP-alpha-D-glucuronate pathway; L-ascorbate from UDP-alpha-D-glucuronate: step 3/4. Functionally, gluconolactonase with low activity towards other sugar lactones, including gulonolactone and galactonolactone. Catalyzes a key step in ascorbic acid (vitamin C) biosynthesis. Can also hydrolyze diisopropyl phosphorofluoridate and phenylacetate (in vitro). Calcium-binding protein. Modulates Ca(2+) signaling, and Ca(2+)-dependent cellular processes and enzyme activities. The chain is Regucalcin (Rgn) from Mus musculus (Mouse).